The sequence spans 211 residues: Protein-methionine-sulfoxide reductase heme-binding subunit MsrQ (211 aa).

5 helical membrane-spanning segments follow: residues 45–65 (HFTG…TPLA), 82–102 (LWCF…ELGV), 116–136 (PYLT…FTST), 153–173 (FVYL…KIIS), and 178–198 (IYAG…LSLF).

Belongs to the MsrQ family. In terms of assembly, heterodimer of a catalytic subunit (MsrP) and a heme-binding subunit (MsrQ). FMN serves as cofactor. Heme b is required as a cofactor.

It is found in the cell inner membrane. Part of the MsrPQ system that repairs oxidized periplasmic proteins containing methionine sulfoxide residues (Met-O), using respiratory chain electrons. Thus protects these proteins from oxidative-stress damage caused by reactive species of oxygen and chlorine generated by the host defense mechanisms. MsrPQ is essential for the maintenance of envelope integrity under bleach stress, rescuing a wide series of structurally unrelated periplasmic proteins from methionine oxidation, including the primary periplasmic chaperone SurA and the lipoprotein Pal. MsrQ provides electrons for reduction to the reductase catalytic subunit MsrP, using the quinone pool of the respiratory chain. The protein is Protein-methionine-sulfoxide reductase heme-binding subunit MsrQ of Escherichia coli O127:H6 (strain E2348/69 / EPEC).